Here is a 304-residue protein sequence, read N- to C-terminus: MGINMLDELKEDLVGIDIRFDEPLKRYTYTKVGGPADYLAFPRNRYELFRIVKFANKHNIPWMVLGNASNLIVRDGGIRGFVIMFDKLNGIAVNGYQVEAEAGANLIATTKVACFHSLTGFEFAAGIPGSIGGAVFMNAGAYGGEIAHILVSAQVLTKDGDIRTIDARDMRFGYRRSVLQETGEVVISAKFNLKPGDYEQIKHEMNRLNHLRELKQPLEYPSCGSVFKRPPGHFAGQLIMEANLEGHRIGGVEVSTKHAGFMVNVDQGTAKDYEDLIADVIAKVKENSGVTLEPEVRIIGDKLN.

Residues 31 to 196 (KVGGPADYLA…ISAKFNLKPG (166 aa)) form the FAD-binding PCMH-type domain. Residue Arg175 is part of the active site. Residue Ser225 is the Proton donor of the active site. Glu295 is an active-site residue.

Belongs to the MurB family. It depends on FAD as a cofactor.

It is found in the cytoplasm. The catalysed reaction is UDP-N-acetyl-alpha-D-muramate + NADP(+) = UDP-N-acetyl-3-O-(1-carboxyvinyl)-alpha-D-glucosamine + NADPH + H(+). It functions in the pathway cell wall biogenesis; peptidoglycan biosynthesis. Cell wall formation. The protein is UDP-N-acetylenolpyruvoylglucosamine reductase of Streptococcus thermophilus (strain CNRZ 1066).